Consider the following 1272-residue polypeptide: uncharacterized protein (1272 aa).

Coiled coils occupy residues 185–212 (IEFL…EAVN), 246–274 (KNSA…YLDA), and 607–640 (ALGK…NTVI). The disordered stretch occupies residues 1179 to 1231 (ELPETSQQPVVPTPPATRPSSPIPPESDILTEEEQLEEQPPRQQQATRKTTTT). A compositionally biased stretch (pro residues) spans 1189 to 1203 (VPTPPATRPSSPIPP). Low complexity predominate over residues 1219 to 1231 (PRQQQATRKTTTT).

This is an uncharacterized protein from Magallana gigas (Pacific oyster).